The sequence spans 476 residues: Doublesex- and mab-3-related transcription factor 3 (476 aa).

A DNA-binding region (DM) is located at residues 29 to 76; it reads CARCRNHGVLSWLKGHKRYCRFKDCTCEKCILIIERQRVMAAQVALRR. Disordered stretches follow at residues 89–130 and 147–195; these read DSLR…RPTA and GTLP…SKNC. The segment covering 102–121 has biased composition (low complexity); sequence DAAATAATASQSSPASQASQ. A compositionally biased stretch (polar residues) spans 165-174; it reads DSSSTDNTAE. Over residues 176 to 185 the composition is skewed to basic and acidic residues; sequence FSDKDTDQRS. The 36-residue stretch at 255–290 folds into the DMA domain; that stretch reads RPPLEVLKKIFPNQKPTVLELILKGCGGDLVSAVEV. The span at 418-432 shows a compositional bias: polar residues; it reads NSTSVFRSSPVLSSR. Residues 418 to 476 form a disordered region; it reads NSTSVFRSSPVLSSRTTEDPRISIPDDGCPIVTKQSIYTEDDYDERSDSSDSRILNTSS.

This sequence belongs to the DMRT family. As to expression, expressed in the ventral spinal cord, in a restrical population of neurons migrating ventrically in the developing spinal cord at 11.5 dpc.

The protein localises to the nucleus. Functionally, probable transcription factor that plays a role in configuring the spinal circuits controlling stride in vertebrates. Involved in neuronal specification within specific subdivision of spinal cord neurons and in the development of a coordinated locomotor network controlling limb movements. May regulate transcription during sexual development. In Mus musculus (Mouse), this protein is Doublesex- and mab-3-related transcription factor 3 (Dmrt3).